The following is a 475-amino-acid chain: Eukaryotic translation initiation factor 2 subunit 3 (475 aa).

Positions 38 to 247 (QATINIGTIG…IVNKIPVPPR (210 aa)) constitute a tr-type G domain. Positions 47 to 54 (GHVAHGKS) are G1. 50–55 (AHGKST) is a GTP binding site. Residues 75–79 (NITIK) are G2. The segment at 133-136 (DCPG) is G3. Residues 189–192 (NKID) and 224–226 (SAQ) contribute to the GTP site. The segment at 189–192 (NKID) is G4. The tract at residues 224–226 (SAQ) is G5. The interval 456–468 (GQIFGGKTITPVL) is interacts with CDC123.

The protein belongs to the TRAFAC class translation factor GTPase superfamily. Classic translation factor GTPase family. EIF2G subfamily. In terms of assembly, eukaryotic translation initiation factor 2 eIF2 is a heterotrimeric complex composed of an alpha, a beta and a gamma subunit. The factors eIF-1, eIF-2, eIF-3, TIF5/eIF-5 and methionyl-tRNAi form a multifactor complex (MFC) that may bind to the 40S ribosome.

The protein localises to the cytoplasm. The protein resides in the cytosol. It catalyses the reaction GTP + H2O = GDP + phosphate + H(+). Its function is as follows. As a subunit of eukaryotic initiation factor 2 eIF2, involved in the early steps of protein synthesis. In the presence of GTP, eIF-2 forms a ternary complex with initiator tRNA Met-tRNAi and then recruits the 40S ribosomal complex and initiation factors eIF-1, eIF-1A and eIF-3 to form the 43S pre-initiation complex (43S PIC), a step that determines the rate of protein translation. The 43S PIC binds to mRNA and scans downstream to the initiation codon, where it forms a 48S initiation complex by codon-anticodon base pairing. This leads to the displacement of eIF-1 to allow GTPase-activating protein (GAP) eIF-5-mediated hydrolysis of eIF2-bound GTP. Hydrolysis of GTP and release of Pi, which makes GTP hydrolysis irreversible, causes the release of the eIF-2-GDP binary complex from the 40S subunit, an event that is essential for the subsequent joining of the 60S ribosomal subunit to form an elongation-competent 80S ribosome. In order for eIF-2 to recycle and catalyze another round of initiation, the GDP bound to eIF-2 must be exchanged with GTP by way of a reaction catalyzed by GDP-GTP exchange factor (GEF) eIF-2B. The protein is Eukaryotic translation initiation factor 2 subunit 3 of Drosophila melanogaster (Fruit fly).